Here is a 411-residue protein sequence, read N- to C-terminus: S-inosyl-L-homocysteine hydrolase (411 aa).

Substrate-binding residues include D121 and E146. T147–T149 contacts NAD(+). Substrate is bound by residues K176 and D180. NAD(+)-binding positions include N181, G210–G215, E233, N268, S289–H291, and N335.

This sequence belongs to the adenosylhomocysteinase family. NAD(+) is required as a cofactor.

Its subcellular location is the cytoplasm. The enzyme catalyses S-inosyl-L-homocysteine + H2O = L-homocysteine + inosine. Its pathway is amino-acid biosynthesis; S-adenosyl-L-methionine biosynthesis. Catalyzes the hydrolysis of S-inosyl-L-homocysteine (SIH) to L-homocysteine (Hcy) and inosine. Likely functions in a S-adenosyl-L-methionine (SAM) recycling pathway from S-adenosyl-L-homocysteine (SAH) produced from SAM-dependent methylation reactions. Can also catalyze the reverse reaction in vitro, i.e. the synthesis of SIH from Hcy and inosine. In Methanosarcina mazei (strain ATCC BAA-159 / DSM 3647 / Goe1 / Go1 / JCM 11833 / OCM 88) (Methanosarcina frisia), this protein is S-inosyl-L-homocysteine hydrolase.